The sequence spans 242 residues: Pyridoxine 5'-phosphate synthase (242 aa).

Asn-6 lines the 3-amino-2-oxopropyl phosphate pocket. 8–9 (DH) lines the 1-deoxy-D-xylulose 5-phosphate pocket. A 3-amino-2-oxopropyl phosphate-binding site is contributed by Arg-17. The active-site Proton acceptor is the His-42. Positions 44 and 49 each coordinate 1-deoxy-D-xylulose 5-phosphate. Glu-69 (proton acceptor) is an active-site residue. Thr-99 contributes to the 1-deoxy-D-xylulose 5-phosphate binding site. Residue His-190 is the Proton donor of the active site. 3-amino-2-oxopropyl phosphate is bound by residues Gly-191 and 212 to 213 (GH).

Belongs to the PNP synthase family. In terms of assembly, homooctamer; tetramer of dimers.

It is found in the cytoplasm. The catalysed reaction is 3-amino-2-oxopropyl phosphate + 1-deoxy-D-xylulose 5-phosphate = pyridoxine 5'-phosphate + phosphate + 2 H2O + H(+). It functions in the pathway cofactor biosynthesis; pyridoxine 5'-phosphate biosynthesis; pyridoxine 5'-phosphate from D-erythrose 4-phosphate: step 5/5. In terms of biological role, catalyzes the complicated ring closure reaction between the two acyclic compounds 1-deoxy-D-xylulose-5-phosphate (DXP) and 3-amino-2-oxopropyl phosphate (1-amino-acetone-3-phosphate or AAP) to form pyridoxine 5'-phosphate (PNP) and inorganic phosphate. The polypeptide is Pyridoxine 5'-phosphate synthase (Neisseria meningitidis serogroup A / serotype 4A (strain DSM 15465 / Z2491)).